A 121-amino-acid polypeptide reads, in one-letter code: Large ribosomal subunit protein bL20 (121 aa).

It belongs to the bacterial ribosomal protein bL20 family.

Its function is as follows. Binds directly to 23S ribosomal RNA and is necessary for the in vitro assembly process of the 50S ribosomal subunit. It is not involved in the protein synthesizing functions of that subunit. This Dinoroseobacter shibae (strain DSM 16493 / NCIMB 14021 / DFL 12) protein is Large ribosomal subunit protein bL20.